Here is a 37-residue protein sequence, read N- to C-terminus: Large ribosomal subunit protein bL36 (37 aa).

It belongs to the bacterial ribosomal protein bL36 family.

The chain is Large ribosomal subunit protein bL36 from Histophilus somni (strain 129Pt) (Haemophilus somnus).